The primary structure comprises 354 residues: Maturase K (354 aa).

It belongs to the intron maturase 2 family. MatK subfamily.

The protein resides in the plastid. It localises to the chloroplast. Its function is as follows. Usually encoded in the trnK tRNA gene intron. Probably assists in splicing its own and other chloroplast group II introns. This Hydrangea quercifolia (Oakleaf hydrangea) protein is Maturase K (matK).